We begin with the raw amino-acid sequence, 210 residues long: ATP-dependent dethiobiotin synthetase BioD (210 aa).

Residue 12–17 (NVGKTH) participates in ATP binding. Thr16 contributes to the Mg(2+) binding site. The active site involves Lys37. A substrate-binding site is contributed by Thr41. Glu114 serves as a coordination point for Mg(2+). An ATP-binding site is contributed by 114 to 117 (EGAG).

The protein belongs to the dethiobiotin synthetase family. As to quaternary structure, homodimer. It depends on Mg(2+) as a cofactor.

It is found in the cytoplasm. The catalysed reaction is (7R,8S)-7,8-diammoniononanoate + CO2 + ATP = (4R,5S)-dethiobiotin + ADP + phosphate + 3 H(+). The protein operates within cofactor biosynthesis; biotin biosynthesis; biotin from 7,8-diaminononanoate: step 1/2. In terms of biological role, catalyzes a mechanistically unusual reaction, the ATP-dependent insertion of CO2 between the N7 and N8 nitrogen atoms of 7,8-diaminopelargonic acid (DAPA, also called 7,8-diammoniononanoate) to form a ureido ring. The sequence is that of ATP-dependent dethiobiotin synthetase BioD from Sulfurovum sp. (strain NBC37-1).